Reading from the N-terminus, the 314-residue chain is MALVAGSAAYQVLRGVTGTFPTQSATLLARAPALCAHTMNRRRMSSSQQTDHLERTANTFRQEIISPAKVCGITNESATVKRVRLAIANREFTFKAGQWVDFFIPGVPKVGGFSICSSPGLLETEGVLELAVKYNLHPPAHWIHSQCALGSEVAIRVGGEFCFDPQPSDLPLDLVLIAGGVGINPLFSILLHVADLHKTREITGRGFQMGNVKLYYCAKNTGELLFKRNILDLVNSFPGKVTCSFHVTQQSSPICRELQPFITEGRITEKDLASYVSTDQLCYICGPPPMIESMCKQLQSLHLPKERILFEKWW.

A signal peptide spans 1–18; it reads MALVAGSAAYQVLRGVTG. Positions 63–166 constitute an FAD-binding FR-type domain; that stretch reads EIISPAKVCG…VGGEFCFDPQ (104 aa). Residue 180-185 coordinates NAD(+); that stretch reads GVGINP.

The protein is Oxidoreductase NAD-binding domain-containing protein 1 (oxnad1) of Xenopus laevis (African clawed frog).